Here is a 191-residue protein sequence, read N- to C-terminus: Adenine phosphoribosyltransferase (191 aa).

This sequence belongs to the purine/pyrimidine phosphoribosyltransferase family. Homodimer.

The protein localises to the cytoplasm. It carries out the reaction AMP + diphosphate = 5-phospho-alpha-D-ribose 1-diphosphate + adenine. The protein operates within purine metabolism; AMP biosynthesis via salvage pathway; AMP from adenine: step 1/1. Catalyzes a salvage reaction resulting in the formation of AMP, that is energically less costly than de novo synthesis. This chain is Adenine phosphoribosyltransferase, found in Clavibacter sepedonicus (Clavibacter michiganensis subsp. sepedonicus).